We begin with the raw amino-acid sequence, 525 residues long: Cytochrome P450 750A1 (525 aa).

The chain crosses the membrane as a helical span at residues 13 to 33 (PLPLPAILIATFIFFFSCWIL). Cysteine 465 lines the heme pocket.

The protein belongs to the cytochrome P450 family. It depends on heme as a cofactor.

The protein localises to the membrane. The protein is Cytochrome P450 750A1 (CYP750A1) of Pinus taeda (Loblolly pine).